Consider the following 879-residue polypeptide: Leucine--tRNA ligase (879 aa).

The short motif at 43-53 (PYPSGRIHMGH) is the 'HIGH' region element. The short motif at 636–640 (KMSKS) is the 'KMSKS' region element. Lys-639 is a binding site for ATP.

This sequence belongs to the class-I aminoacyl-tRNA synthetase family.

It localises to the cytoplasm. It carries out the reaction tRNA(Leu) + L-leucine + ATP = L-leucyl-tRNA(Leu) + AMP + diphosphate. This Afipia carboxidovorans (strain ATCC 49405 / DSM 1227 / KCTC 32145 / OM5) (Oligotropha carboxidovorans) protein is Leucine--tRNA ligase.